A 232-amino-acid polypeptide reads, in one-letter code: MLKLTDITWLYHHLPMRFSLTVERGEQVAILGPSGAGKSTLLNLIAGFLTPASGLLTIDDVDHTTTPPSRRPVSMLFQENNLFSHLTVAQNIGLGLNPGLKLNAAQQKKMHAIAHQMGIDNLMARLPGELSGGQRQRVALARCLVREQPILLLDEPFSALDPALRQEMLTLVSTSCQQQKMTLLMVSHSVEDAARIATRSVVVADGRIAWQGKTDELLSGKASASALLGIKG.

Positions 2–230 (LKLTDITWLY…KASASALLGI (229 aa)) constitute an ABC transporter domain. 32 to 39 (GPSGAGKS) serves as a coordination point for ATP.

This sequence belongs to the ABC transporter superfamily. Thiamine importer (TC 3.A.1.19.1) family. The complex is composed of two ATP-binding proteins (ThiQ), two transmembrane proteins (ThiP) and a solute-binding protein (ThiB).

The protein localises to the cell inner membrane. The catalysed reaction is thiamine(out) + ATP + H2O = thiamine(in) + ADP + phosphate + H(+). Functionally, part of the ABC transporter complex ThiBPQ involved in thiamine import. Responsible for energy coupling to the transport system. In Escherichia coli O6:K15:H31 (strain 536 / UPEC), this protein is Thiamine import ATP-binding protein ThiQ.